The chain runs to 1176 residues: Translation initiation factor IF-2 (1176 aa).

Composition is skewed to low complexity over residues 32–44 (IAAK…ISDS), 57–79 (ASPS…AGKS), 94–166 (APVA…AAPS), and 193–235 (KPTP…VKPT). 2 disordered regions span residues 32-502 (IAAK…QRQK) and 535-567 (RPAK…RQRR). Pro residues predominate over residues 251–270 (APPPASTPRPAPSRPTPRPA). Composition is skewed to low complexity over residues 388–409 (GRPG…GGMR) and 439–469 (NRPT…FRPG). Over residues 478-492 (GRPDWDDSAKLEALR) the composition is skewed to basic and acidic residues. Basic residues predominate over residues 553-567 (VRKRRKETARQRQRR). One can recognise a tr-type G domain in the interval 668–840 (RRPPVVTVMG…LLLVTEVEDL (173 aa)). The interval 677 to 684 (GHVDHGKT) is G1. Position 677–684 (677–684 (GHVDHGKT)) interacts with GTP. Residues 702–706 (GITQH) form a G2 region. Positions 727–730 (DTPG) are G3. Residues 727 to 731 (DTPGH) and 781 to 784 (NKID) each bind GTP. The tract at residues 781–784 (NKID) is G4. The G5 stretch occupies residues 817–819 (SAI).

The protein belongs to the TRAFAC class translation factor GTPase superfamily. Classic translation factor GTPase family. IF-2 subfamily.

The protein localises to the cytoplasm. One of the essential components for the initiation of protein synthesis. Protects formylmethionyl-tRNA from spontaneous hydrolysis and promotes its binding to the 30S ribosomal subunits. Also involved in the hydrolysis of GTP during the formation of the 70S ribosomal complex. This Synechococcus sp. (strain CC9902) protein is Translation initiation factor IF-2.